Here is a 107-residue protein sequence, read N- to C-terminus: MTEQIKKLDPDTAIDIAYDIFLEMAPENLDPADILLFNMQFEERGAVEFVETADNWDEEIGVLIDPEEYAEVWIGLLNEKDEMDDVFAKFLISHREEDREYHIVWKE.

It belongs to the putative dsDNA mimic protein family.

Its function is as follows. May act as a double-stranded DNA (dsDNA) mimic. Probably regulates the activity of a dsDNA-binding protein. The chain is Putative double-stranded DNA mimic protein Asuc_1259 from Actinobacillus succinogenes (strain ATCC 55618 / DSM 22257 / CCUG 43843 / 130Z).